A 221-amino-acid polypeptide reads, in one-letter code: Agamous-like MADS-box protein AGL14 (221 aa).

The region spanning 3-57 (RGKTEMKRIENATSRQVTFSKRRNGLLKKAFELSVLCDAEVALIIFSPRGKLYEF) is the MADS-box domain. In terms of domain architecture, K-box spans 87-177 (SQQSKDETYG…MEKCEMQGRG (91 aa)).

Interacts with AGL16. As to expression, preferentially expressed in roots. Expressed in lateral root cap, root epidermis, root endodermis, columella of the root meristematic region, the vascular cylinder in differentiated zones of the primary root and in emerged lateral root primordia. Expressed in pollen.

The protein localises to the nucleus. Transcriptional activator that regulates root development by controlling meristem size and patterning of the root apical meristem. Regulates auxin transport and gradients in the root meristematic cells via direct regulation of the auxin efflux carrier PIN1 and PIN4 gene expression. Binds specifically to the CArG-box DNA sequences in the promoter regions of PIN1 and PIN4 genes. Involved in the regulation of shoot apical meristem (SAM) cell identities and transitions. Promotes flowering transition and participates in flower meristem maintenance and determinacy. Positively regulates TFL1 and WUS expression. Binds directly to the TFL1 regulatory sequences. In Arabidopsis thaliana (Mouse-ear cress), this protein is Agamous-like MADS-box protein AGL14.